Consider the following 305-residue polypeptide: Virulence plasmid integrase pGP7-D (305 aa).

The Core-binding (CB) domain occupies 13–99; sequence LTFGEASEIW…CYISFTKFLY (87 aa). The Tyr recombinase domain occupies 127-303; the sequence is VKTVSISKKE…GNSSVANIPT (177 aa). Catalysis depends on residues lysine 188 and arginine 257. Tyrosine 289 functions as the O-(3'-phospho-DNA)-tyrosine intermediate in the catalytic mechanism.

This sequence belongs to the 'phage' integrase family.

This chain is Virulence plasmid integrase pGP7-D, found in Chlamydia muridarum (strain MoPn / Nigg).